The chain runs to 809 residues: Leucine--tRNA ligase (809 aa).

The short motif at 40-51 (PYPSGQGLHVGH) is the 'HIGH' region element. The 'KMSKS' region motif lies at 581–585 (KMSKS). ATP is bound at residue lysine 584.

This sequence belongs to the class-I aminoacyl-tRNA synthetase family.

The protein resides in the cytoplasm. The catalysed reaction is tRNA(Leu) + L-leucine + ATP = L-leucyl-tRNA(Leu) + AMP + diphosphate. This Levilactobacillus brevis (strain ATCC 367 / BCRC 12310 / CIP 105137 / JCM 1170 / LMG 11437 / NCIMB 947 / NCTC 947) (Lactobacillus brevis) protein is Leucine--tRNA ligase.